A 148-amino-acid chain; its full sequence is Succinate dehydrogenase assembly factor 3, mitochondrial (148 aa).

The transit peptide at 1 to 12 (MYALRPTLRRSA) directs the protein to the mitochondrion. Positions 129–148 (RGTEGDLEDGDGGESGQKSQ) are disordered.

Belongs to the complex I LYR family. SDHAF3 subfamily. As to quaternary structure, interacts with the iron-sulfur protein subunit within the SDH catalytic dimer.

The protein resides in the mitochondrion matrix. Functionally, plays an essential role in the assembly of succinate dehydrogenase (SDH), an enzyme complex (also referred to as respiratory complex II) that is a component of both the tricarboxylic acid (TCA) cycle and the mitochondrial electron transport chain, and which couples the oxidation of succinate to fumarate with the reduction of ubiquinone (coenzyme Q) to ubiquinol. Promotes maturation of the iron-sulfur protein subunit of the SDH catalytic dimer, protecting it from the deleterious effects of oxidants. May act together with SDHAF1. This chain is Succinate dehydrogenase assembly factor 3, mitochondrial, found in Neurospora crassa (strain ATCC 24698 / 74-OR23-1A / CBS 708.71 / DSM 1257 / FGSC 987).